The primary structure comprises 901 residues: Putative receptor protein kinase CRINKLY4 (901 aa).

An N-terminal signal peptide occupies residues Met-1 to Gly-24. The Extracellular portion of the chain corresponds to Leu-25 to Arg-423. Repeat copies occupy residues Val-33–Pro-68, Phe-72–Gln-107, Leu-125–Glu-160, Val-162–Gly-195, Phe-203–Pro-236, Met-253–Pro-287, and Met-292–Pro-330. The segment at Val-33–Pro-330 is 7 X 36 AA repeats. N-linked (GlcNAc...) asparagine glycosylation is found at Asn-151 and Asn-179. A glycan (N-linked (GlcNAc...) asparagine) is linked at Asn-282. Intrachain disulfides connect Cys-338-Cys-365, Cys-368-Cys-382, and Cys-372-Cys-390. Residues Cys-357–Gln-391 form a TNFR-Cys repeat. N-linked (GlcNAc...) asparagine glycosylation is present at Asn-383. A helical transmembrane segment spans residues Ile-424–Cys-444. Residues Leu-445–Phe-901 lie on the Cytoplasmic side of the membrane. In terms of domain architecture, Protein kinase spans Phe-505–Asp-712. Residues Val-511–Val-519 and Lys-533 each bind ATP. Asp-634 serves as the catalytic Proton acceptor. The tract at residues Val-845–Gly-876 is disordered.

The protein belongs to the protein kinase superfamily. Ser/Thr protein kinase family. In terms of assembly, homodimer.

The protein resides in the cell membrane. Its subcellular location is the endosome. It is found in the multivesicular body membrane. It carries out the reaction L-seryl-[protein] + ATP = O-phospho-L-seryl-[protein] + ADP + H(+). The catalysed reaction is L-threonyl-[protein] + ATP = O-phospho-L-threonyl-[protein] + ADP + H(+). Putative receptor protein kinase. Could play a role in a differentiation signal. The CRINKLY4 (CR4) mutation affects leaf epidermis differentiation such that cell size and morphology are altered, and surface functions are compromised, allowing graft-like fusions between organs. This is Putative receptor protein kinase CRINKLY4 (CR4) from Zea mays (Maize).